A 164-amino-acid polypeptide reads, in one-letter code: UPF0304 protein YfbU (164 aa).

This sequence belongs to the UPF0304 family.

The chain is UPF0304 protein YfbU from Shigella flexneri serotype 5b (strain 8401).